A 31-amino-acid chain; its full sequence is Ranatuerin-2 (31 aa).

C23 and C28 are disulfide-bonded.

Belongs to the frog skin active peptide (FSAP) family. Ranatuerin subfamily. As to expression, expressed by the skin glands.

It localises to the secreted. Functionally, antibacterial activity against Gram-positive bacterium S.aureus (MIC=60 uM). Shows no detectable hemolytic activity towards human erythrocytes. The protein is Ranatuerin-2 of Aquarana catesbeiana (American bullfrog).